The sequence spans 300 residues: GTP cyclohydrolase FolE2 (300 aa).

Belongs to the GTP cyclohydrolase IV family.

The enzyme catalyses GTP + H2O = 7,8-dihydroneopterin 3'-triphosphate + formate + H(+). Its pathway is cofactor biosynthesis; 7,8-dihydroneopterin triphosphate biosynthesis; 7,8-dihydroneopterin triphosphate from GTP: step 1/1. Converts GTP to 7,8-dihydroneopterin triphosphate. In Bacillus licheniformis (strain ATCC 14580 / DSM 13 / JCM 2505 / CCUG 7422 / NBRC 12200 / NCIMB 9375 / NCTC 10341 / NRRL NRS-1264 / Gibson 46), this protein is GTP cyclohydrolase FolE2.